Here is a 151-residue protein sequence, read N- to C-terminus: Multiprotein-bridging factor 1 (151 aa).

Disordered stretches follow at residues 1–29 and 78–98; these read MSDW…ARSQ and DPNV…SQKD. Positions 41 to 119 are essential for TBP-binding; sequence VVSVDKKYGS…VNDYEAARAI (79 aa). Positions 85–139 constitute an HTH cro/C1-type domain; sequence ISRARTDKKMSQKDLATKINEKPTVVNDYEAARAIPNQQVLSKLERALGVKLRGN. Basic and acidic residues predominate over residues 88 to 98; the sequence is ARTDKKMSQKD. The segment at residues 96–115 is a DNA-binding region (H-T-H motif); sequence QKDLATKINEKPTVVNDYEA. A Phosphoserine modification is found at serine 143.

It belongs to the MBF1 family. Interacts with TBP and the transcription factor GCN4. Interacts with RPS3/us3.

Its subcellular location is the cytoplasm. It localises to the nucleus. In terms of biological role, transcriptional coactivator that stimulates GCN4-dependent transcriptional activity by bridging the DNA-binding region of GCN4 and TBP (SPT15), thereby recruiting TBP to GCN4-bound promoters. Involved in induction of the ribosome quality control (RQC) pathway; a pathway that degrades nascent peptide chains during problematic translation. Required to prevent stalled ribosomes from frameshifting. This Saccharomyces cerevisiae (strain ATCC 204508 / S288c) (Baker's yeast) protein is Multiprotein-bridging factor 1 (MBF1).